The primary structure comprises 98 residues: NADH-ubiquinone oxidoreductase chain 4L (98 aa).

A run of 3 helical transmembrane segments spans residues 1–21, 29–49, and 61–81; these read MSMV…GLLM, SLLC…VTIL, and IILL…LVMV.

Belongs to the complex I subunit 4L family. In terms of assembly, core subunit of respiratory chain NADH dehydrogenase (Complex I) which is composed of 45 different subunits.

The protein localises to the mitochondrion inner membrane. It carries out the reaction a ubiquinone + NADH + 5 H(+)(in) = a ubiquinol + NAD(+) + 4 H(+)(out). Functionally, core subunit of the mitochondrial membrane respiratory chain NADH dehydrogenase (Complex I) which catalyzes electron transfer from NADH through the respiratory chain, using ubiquinone as an electron acceptor. Part of the enzyme membrane arm which is embedded in the lipid bilayer and involved in proton translocation. The chain is NADH-ubiquinone oxidoreductase chain 4L (MT-ND4L) from Halichoerus grypus (Gray seal).